The following is a 425-amino-acid chain: Glucose-6-phosphate 1-dehydrogenase (425 aa).

NADP(+) is bound by residues arginine 44 and lysine 135. Histidine 165, lysine 169, glutamate 201, and aspartate 220 together coordinate substrate. The active-site Proton acceptor is the histidine 225. Residue lysine 311 participates in substrate binding.

Belongs to the glucose-6-phosphate dehydrogenase family.

It catalyses the reaction D-glucose 6-phosphate + NADP(+) = 6-phospho-D-glucono-1,5-lactone + NADPH + H(+). Its pathway is carbohydrate degradation; pentose phosphate pathway; D-ribulose 5-phosphate from D-glucose 6-phosphate (oxidative stage): step 1/3. In terms of biological role, catalyzes the oxidation of glucose 6-phosphate to 6-phosphogluconolactone. The polypeptide is Glucose-6-phosphate 1-dehydrogenase (Helicobacter pylori (strain ATCC 700392 / 26695) (Campylobacter pylori)).